Consider the following 90-residue polypeptide: Probable Fe(2+)-trafficking protein (90 aa).

This sequence belongs to the Fe(2+)-trafficking protein family. As to quaternary structure, monomer.

Its function is as follows. Could be a mediator in iron transactions between iron acquisition and iron-requiring processes, such as synthesis and/or repair of Fe-S clusters in biosynthetic enzymes. This is Probable Fe(2+)-trafficking protein from Sodalis glossinidius (strain morsitans).